A 67-amino-acid chain; its full sequence is Ayadualin (67 aa).

A signal peptide spans 1–20 (MNKIILFSAVFLALVFCAEA). A compositionally biased stretch (acidic residues) spans 35 to 54 (PDDTVDIDEGLPDAFDEDYE). The interval 35 to 67 (PDDTVDIDEGLPDAFDEDYEQDGHNPYPCRGDC) is disordered. The Integrin-binding motif motif lies at 64 to 66 (RGD).

As to expression, salivary gland.

The protein localises to the secreted. Functionally, inhibits collagen- and ADP-induced host platelet aggregation by blocking the binding of host integrin alpha-IIb/beta-3 (ITGA2B/ITGB3) to fibrinogen. Inhibits the intrinsic blood coagulation pathway in the host by blocking the activity of host coagulation factor XIIa (F12). The protein is Ayadualin of Lutzomyia ayacuchensis (Sand fly).